Consider the following 204-residue polypeptide: Tic20 family protein Ycf60 (204 aa).

Transmembrane regions (helical) follow at residues 5-25 (LPSL…SFII), 87-107 (LMPL…IFFI), 133-153 (ILLF…PIEF), and 159-179 (GLMM…YSII).

The protein belongs to the Tic20 family.

The protein localises to the plastid. It localises to the chloroplast membrane. This is Tic20 family protein Ycf60 (ycf60) from Gracilaria tenuistipitata var. liui (Red alga).